The sequence spans 327 residues: uncharacterized protein (327 aa).

A signal peptide spans 1–24; that stretch reads MAMACLCLANISWATVCANSTGVA.

This sequence belongs to the fimbrial protein family.

The protein resides in the fimbrium. Its function is as follows. Part of the sfmACDHF fimbrial operon. Could contribute to adhesion to various surfaces in specific environmental niches. Increases adhesion to eukaryotic T24 bladder epithelial cells in the absence of fim genes. This is an uncharacterized protein from Escherichia coli (strain K12).